The sequence spans 658 residues: Biosynthetic arginine decarboxylase (658 aa).

At Lys-127 the chain carries N6-(pyridoxal phosphate)lysine. 307-317 contacts substrate; the sequence is FDVGGGLGVDY.

The protein belongs to the Orn/Lys/Arg decarboxylase class-II family. SpeA subfamily. As to quaternary structure, homotetramer. Requires pyridoxal 5'-phosphate as cofactor. The cofactor is Mg(2+). Processed post-translationally to a 70 kDa mature form. Post-translationally, the N-terminus is blocked.

The protein localises to the periplasm. It catalyses the reaction L-arginine + H(+) = agmatine + CO2. It participates in amine and polyamine biosynthesis; agmatine biosynthesis; agmatine from L-arginine: step 1/1. Its activity is regulated as follows. Down-regulated by polyamine end products putrescine and spermidine. Its function is as follows. Catalyzes the biosynthesis of agmatine from arginine. In Escherichia coli (strain K12), this protein is Biosynthetic arginine decarboxylase (speA).